The sequence spans 244 residues: uncharacterized protein (244 aa).

An HTH gntR-type domain is found at 7-74; sequence VKEKDQVVAH…YHRGAFIERF (68 aa). A DNA-binding region (H-T-H motif) is located at residues 34–53; the sequence is RNEIAHGLGVSRVPIQEALV.

This is an uncharacterized protein from Mycobacterium tuberculosis (strain CDC 1551 / Oshkosh).